The sequence spans 520 residues: MSSTRHGGNFQLELAAGTLLPKEMPGINAFTFYDYLLDLAQSGASPESVLSVEPIYHRLAYISRLVAWIDASGFSHGTLPRLFLSTEPPTAEQIKSNLSPSDIEQILFFVESETKQQVGCDLWKVLRQFLLTASTLKWVKNRPCSKPDWFKVNEFRNGGAGYARQAMAITFGLTNESCARKLIMTYVSGDLHRHQNDSGEFFRLDVGESDEDAFSCGLLLDKRSGMLGASMDMAVMRKDPETAAVAEIDVFEIKCRAKYTFCPENLMHPLSACYERMLDSPGEETIRDFLFGIRAPGVEYFPPDSVPSAAEALLTCAKGWASPDAKASTRDRGSLIEKRHLQLNREVRSTVYLFGEPCLKTNSIRPIVWPSGGTSCELPIFINPKHQNFKQIFVQTYVLADYYPDAKISQYLVTFIGRSRRANEFGRVLRLDGGREDLAEPISLDHIHAIPILLIKTPVVIDRDHFSDLSSLGKEAFEFSVKETWGNAADAAAAPRIGRGCAAKKPGPTELLCAPESTQH.

It belongs to the herpesviridae alkaline nuclease family. In terms of assembly, interacts with major DNA-binding protein; this interaction increases the nuclease processivity of the alkaline exonuclease.

The protein localises to the host nucleus. It is found in the host cytoplasm. In terms of biological role, plays a role in processing non linear or branched viral DNA intermediates in order to promote the production of mature packaged unit-length linear progeny viral DNA molecules. Exhibits endonuclease and exonuclease activities and accepts both double-stranded and single-stranded DNA as substrate. Exonuclease digestion of DNA is in the 5'-&gt; 3' direction and the products are 5'-monophosphate nucleosides. Additionally, forms a recombinase with the major DNA-binding protein, which displays strand exchange activity. This Psittacid herpesvirus 1 (isolate Amazon parrot/-/97-0001/1997) (PsHV-1) protein is Alkaline nuclease (UL12).